A 272-amino-acid polypeptide reads, in one-letter code: Acidic leucine-rich nuclear phosphoprotein 32 family member B (272 aa).

LRR repeat units lie at residues 16-40 (PAAV…LTDE), 43-64 (NLEF…PKLP), 65-84 (KLKK…DRLA), and 89-110 (SLTH…EPLK). Residues 123-161 (CEVTNRSDYRETVFRLLPQLSYLDGYDREDQEAPDSDVE) enclose the LRRCT domain. Over residues 149–254 (DREDQEAPDS…DEDEDEEEEE (106 aa)) the composition is skewed to acidic residues. The tract at residues 149–272 (DREDQEAPDS…RETDDEGEDD (124 aa)) is disordered. Phosphoserine is present on residues Ser164 and Ser171. Positions 255-265 (SGKGEKRKRET) are enriched in basic and acidic residues. The Nuclear localization signal signature appears at 260-263 (KRKR). Thr265 is subject to Phosphothreonine.

Belongs to the ANP32 family. As to quaternary structure, interacts with histones H3 and H4. Interacts with KLF5; this interaction induces promoter region-specific histone incorporation and inhibition of histone acetylation by ANP32B. In terms of processing, some glutamate residues are glycylated by TTLL8. This modification occurs exclusively on glutamate residues and results in a glycine chain on the gamma-carboxyl group. Post-translationally, directly cleaved by caspase-3/CASP3. Predominantly expressed in brain. Expressed in the entire embryonic brain, whereas in the adult brain its expression is restricted to the subventricular zone where there are neural progenitor cells.

The protein resides in the nucleus. Multifunctional protein that is involved in the regulation of many processes including cell proliferation, apoptosis, cell cycle progression or transcription. Regulates the proliferation of neuronal stem cells, differentiation of leukemic cells and progression from G1 to S phase of the cell cycle. As negative regulator of caspase-3-dependent apoptosis, may act as an antagonist of ANP32A in regulating tissue homeostasis. Exhibits histone chaperone properties, able to recruit histones to certain promoters, thus regulating the transcription of specific genes. Also plays an essential role in the nucleocytoplasmic transport of specific mRNAs via the uncommon nuclear mRNA export receptor XPO1/CRM1. Participates in the regulation of adequate adaptive immune responses by acting on mRNA expression and cell proliferation. In Rattus norvegicus (Rat), this protein is Acidic leucine-rich nuclear phosphoprotein 32 family member B (Anp32b).